Consider the following 280-residue polypeptide: Cytochrome bc1 complex cytochrome c subunit (280 aa).

The helical transmembrane segment at 25–45 (LSGGVLLLIALTIAGGLAAVL) threads the bilayer. 2 Cytochrome c domains span residues 60 to 140 (ALLR…QANG) and 161 to 239 (NDLG…KVAT). Positions 73, 76, 77, 174, 177, and 178 each coordinate heme c. A helical transmembrane segment spans residues 258–278 (GMAMWIIGMVAAIGLALWIGA).

As to quaternary structure, the cytochrome bc1 complex is composed of a cytochrome b (QcrB), the Rieske iron-sulfur protein (QcrA) and a diheme cytochrome c (QcrC) subunit. Post-translationally, binds 2 heme c groups covalently per subunit.

It localises to the cell membrane. It catalyses the reaction a quinol + 2 Fe(III)-[cytochrome c](out) = a quinone + 2 Fe(II)-[cytochrome c](out) + 2 H(+)(out). Functionally, cytochrome b subunit of the cytochrome bc1 complex, an essential component of the respiratory electron transport chain required for ATP synthesis. The bc1 complex catalyzes the oxidation of ubiquinol and the reduction of cytochrome c in the respiratory chain. The bc1 complex operates through a Q-cycle mechanism that couples electron transfer to generation of the proton gradient that drives ATP synthesis. The sequence is that of Cytochrome bc1 complex cytochrome c subunit (qcrC) from Mycobacterium bovis (strain ATCC BAA-935 / AF2122/97).